The following is a 358-amino-acid chain: Peptide chain release factor 1 (358 aa).

Residue Q235 is modified to N5-methylglutamine.

Belongs to the prokaryotic/mitochondrial release factor family. Post-translationally, methylated by PrmC. Methylation increases the termination efficiency of RF1.

Its subcellular location is the cytoplasm. In terms of biological role, peptide chain release factor 1 directs the termination of translation in response to the peptide chain termination codons UAG and UAA. In Neisseria gonorrhoeae (strain NCCP11945), this protein is Peptide chain release factor 1.